The primary structure comprises 269 residues: GTP cyclohydrolase FolE2 (269 aa).

Belongs to the GTP cyclohydrolase IV family.

The catalysed reaction is GTP + H2O = 7,8-dihydroneopterin 3'-triphosphate + formate + H(+). Its pathway is cofactor biosynthesis; 7,8-dihydroneopterin triphosphate biosynthesis; 7,8-dihydroneopterin triphosphate from GTP: step 1/1. Functionally, converts GTP to 7,8-dihydroneopterin triphosphate. The polypeptide is GTP cyclohydrolase FolE2 (Thiobacillus denitrificans (strain ATCC 25259 / T1)).